The primary structure comprises 79 residues: MKCATLFLVLSMVVLMAEPGDAFFHHIFRGIVHVGKTIHRLVTGGKAEQDQQDQQYQQEQQEQQAQQYQRFNRERAAFD.

A signal peptide spans 1–22 (MKCATLFLVLSMVVLMAEPGDA). The residue at position 44 (Gly-44) is a Glycine amide. A disordered region spans residues 45–79 (GKAEQDQQDQQYQQEQQEQQAQQYQRFNRERAAFD). A propeptide spanning residues 47–79 (AEQDQQDQQYQQEQQEQQAQQYQRFNRERAAFD) is cleaved from the precursor. A compositionally biased stretch (low complexity) spans 52–69 (QDQQYQQEQQEQQAQQYQ).

In terms of tissue distribution, expressed in mast cells in gill, skin and gut, and in lining blood vessels in the viscera. Also in intestine, spleen, anterior kidney, and blood cells.

The protein localises to the secreted. Functionally, antimicrobial peptide with broad-spectrum activity against Gram-positive and Gram-negative bacteria as well as against a variety of fungi. Rapidly inactivates channel catfish herpesvirus (ED(50)=4 uM) and frog virus 3 (ED(50)=13 uM) over a wide temperature range. Seems to disrupt the membranes by adopting an alpha helical conformation and forming toroidal pores. Has hemolytic activity. This chain is Moronecidin, found in Morone saxatilis (Striped bass).